The sequence spans 524 residues: Methylmalonyl-CoA carboxyltransferase 12S subunit (524 aa).

A CoA carboxyltransferase N-terminal domain is found at 13–268 (MEGRVEQLAE…NNTEEASFVN (256 aa)). The segment at 13–506 (MEGRVEQLAE…RRKIASALEM (494 aa)) is carboxyltransferase. In terms of domain architecture, CoA carboxyltransferase C-terminal spans 274-506 (SPNTELRDIV…RRKIASALEM (233 aa)).

Homohexamer. Transcarboxylase is composed of three subunits: 1.3S, 5S, and 12S. The core of the enzyme is composed of six 12S subunits. On each side of the core there are three pairs of 5S subunits. Each 5S dimer is attached to the core by two 1.3S subunits. Thus the total number of chains is 30 (6 + 12 + 12).

It carries out the reaction (S)-methylmalonyl-CoA + pyruvate = propanoyl-CoA + oxaloacetate. The 12S subunit specifically catalyzes the transfer of the carboxyl group of methylmalonyl CoA to the biotin of the 1.3S subunit forming propanoyl-CoA and carboxylated 1.3S-biotin. This Propionibacterium freudenreichii subsp. shermanii protein is Methylmalonyl-CoA carboxyltransferase 12S subunit.